Consider the following 276-residue polypeptide: TCP pilus virulence regulatory protein (276 aa).

The HTH araC/xylS-type domain occupies 172–269; that stretch reads EKISCLVKSD…NVAPSEYLFM (98 aa). 2 consecutive DNA-binding regions (H-T-H motif) follow at residues 189–210 and 236–259; these read ADIC…ESRG and IKQI…KSTM.

The protein resides in the cytoplasm. In terms of biological role, probable regulatory protein for the tcp operon. In Vibrio cholerae serotype O1 (strain ATCC 39541 / Classical Ogawa 395 / O395), this protein is TCP pilus virulence regulatory protein (tcpN).